The chain runs to 293 residues: G1/S-specific cyclin-D3 (293 aa).

The Cyclin N-terminal domain occupies 27–152 (VLQSLLRLEE…LVLGKLKWDL (126 aa)). A disordered region spans residues 257–293 (REAAQTAPSPVPKAPGGSSSQGPSQTSTPTDVTAIHL). Residues serine 265 and serine 280 each carry the phosphoserine modification. Residues 271–286 (PGGSSSQGPSQTSTPT) show a composition bias toward low complexity. Threonine 284 carries the post-translational modification Phosphothreonine.

It belongs to the cyclin family. Cyclin D subfamily. In terms of assembly, interacts with the CDK4 and CDK6 protein kinases to form a serine/threonine kinase holoenzyme complex. The cyclin subunit imparts substrate specificity to the complex. Interacts with ATF5. Interacts with EIF3K. Component of the ternary complex cyclin D/CDK4/CDKN1B required for nuclear translocation and modulation of CDK4-mediated kinase activity. Can form similar complexes with either CDKN1A or CDKN2A. In terms of processing, phosphorylation at Thr-284 by MAP kinases is required for ubiquitination and degradation by the DCX(AMBRA1) complex. Ubiquitinated by the DCX(AMBRA1) complex during the transition from G1 to S cell phase, leading to its degradation: ubiquitination is dependent on Thr-284 phosphorylation. The DCX(AMBRA1) complex represents the major regulator of CCND3 stability during the G1/S transition. Polyubiquitinated by the SCF(FBXL2) complex, leading to proteasomal degradation.

The protein resides in the nucleus. It localises to the cytoplasm. Regulatory component of the cyclin D3-CDK4 (DC) complex that phosphorylates and inhibits members of the retinoblastoma (RB) protein family including RB1 and regulates the cell-cycle during G(1)/S transition. Phosphorylation of RB1 allows dissociation of the transcription factor E2F from the RB/E2F complex and the subsequent transcription of E2F target genes which are responsible for the progression through the G(1) phase. Hypophosphorylates RB1 in early G(1) phase. Cyclin D-CDK4 complexes are major integrators of various mitogenenic and antimitogenic signals. Component of the ternary complex, cyclin D3/CDK4/CDKN1B, required for nuclear translocation and activity of the cyclin D-CDK4 complex. Shows transcriptional coactivator activity with ATF5 independently of CDK4. The protein is G1/S-specific cyclin-D3 of Rattus norvegicus (Rat).